Consider the following 183-residue polypeptide: Phospholipase A2 inhibitor gamma subunit A1 (183 aa).

8 disulfide bridges follow: cysteine 3–cysteine 28, cysteine 6–cysteine 13, cysteine 21–cysteine 49, cysteine 55–cysteine 76, cysteine 77–cysteine 82, cysteine 100–cysteine 125, cysteine 118–cysteine 147, and cysteine 151–cysteine 173. A glycan (N-linked (GlcNAc...) asparagine) is linked at asparagine 158.

It belongs to the CNF-like-inhibitor family. In terms of assembly, heterodimer of subunit A and subunit B. In terms of tissue distribution, expressed by the liver.

The protein resides in the secreted. Its function is as follows. Phospholipase A2 (PA2) inhibitor. Inhibits the enzymatic activity of PA2 of Deinagkistrodon acutus. Also shows a wide anti-hemorrhage activities to D.acutus, Naja atra and Agkistrodon halys venom. The native protein is more potent than the recombinant one. The sequence is that of Phospholipase A2 inhibitor gamma subunit A1 from Trimerodytes annularis (Red-bellied annulate keelback).